The chain runs to 148 residues: Ribosome-binding factor A (148 aa).

The interval 120–148 (AKAREGASYAGDADPYRTAEPDADDAPRA) is disordered. Residues 133-148 (DPYRTAEPDADDAPRA) are compositionally biased toward basic and acidic residues.

It belongs to the RbfA family. As to quaternary structure, monomer. Binds 30S ribosomal subunits, but not 50S ribosomal subunits or 70S ribosomes.

It is found in the cytoplasm. In terms of biological role, one of several proteins that assist in the late maturation steps of the functional core of the 30S ribosomal subunit. Associates with free 30S ribosomal subunits (but not with 30S subunits that are part of 70S ribosomes or polysomes). Required for efficient processing of 16S rRNA. May interact with the 5'-terminal helix region of 16S rRNA. The protein is Ribosome-binding factor A of Micrococcus luteus (strain ATCC 4698 / DSM 20030 / JCM 1464 / CCM 169 / CCUG 5858 / IAM 1056 / NBRC 3333 / NCIMB 9278 / NCTC 2665 / VKM Ac-2230) (Micrococcus lysodeikticus).